Consider the following 462-residue polypeptide: UDP-N-acetylmuramate--L-alanine ligase (462 aa).

G112–T118 contributes to the ATP binding site.

This sequence belongs to the MurCDEF family.

The protein localises to the cytoplasm. The catalysed reaction is UDP-N-acetyl-alpha-D-muramate + L-alanine + ATP = UDP-N-acetyl-alpha-D-muramoyl-L-alanine + ADP + phosphate + H(+). It participates in cell wall biogenesis; peptidoglycan biosynthesis. Its function is as follows. Cell wall formation. The chain is UDP-N-acetylmuramate--L-alanine ligase from Geobacter sulfurreducens (strain ATCC 51573 / DSM 12127 / PCA).